Consider the following 267-residue polypeptide: Cerberus (267 aa).

The N-terminal stretch at 1-17 (MHLLLFQLLVLLPLGKT) is a signal peptide. Disordered regions lie at residues 19–52 (RHQDGRQNQSSLSPVLLPRNQRELPTGNHEEAEE) and 87–113 (WKKPEREMHPSRDSDSEPFPPGTQSLI). The N-linked (GlcNAc...) asparagine glycan is linked to Asn26. Over residues 88–101 (KKPEREMHPSRDSD) the composition is skewed to basic and acidic residues. 4 cysteine pairs are disulfide-bonded: Cys162–Cys209, Cys176–Cys223, Cys186–Cys239, and Cys190–Cys241. The CTCK domain maps to 162 to 246 (CRTVPFSQTI…EECQCKVKTE (85 aa)). An N-linked (GlcNAc...) asparagine glycan is attached at Asn222.

The protein belongs to the DAN family. In terms of assembly, forms monomers and predominantly dimers. In terms of processing, N-glycosylated.

The protein localises to the secreted. In terms of biological role, cytokine that may play a role in anterior neural induction and somite formation during embryogenesis in part through a BMP-inhibitory mechanism. Can regulate Nodal signaling during gastrulation as well as the formation and patterning of the primitive streak. In Homo sapiens (Human), this protein is Cerberus (CER1).